A 139-amino-acid polypeptide reads, in one-letter code: ATP synthase epsilon chain (139 aa).

Belongs to the ATPase epsilon chain family. As to quaternary structure, F-type ATPases have 2 components, CF(1) - the catalytic core - and CF(0) - the membrane proton channel. CF(1) has five subunits: alpha(3), beta(3), gamma(1), delta(1), epsilon(1). CF(0) has three main subunits: a, b and c.

It is found in the cell inner membrane. Its function is as follows. Produces ATP from ADP in the presence of a proton gradient across the membrane. This chain is ATP synthase epsilon chain, found in Acinetobacter baumannii (strain AB307-0294).